Reading from the N-terminus, the 405-residue chain is NADH-quinone oxidoreductase subunit D (405 aa).

It belongs to the complex I 49 kDa subunit family. In terms of assembly, NDH-1 is composed of 14 different subunits. Subunits NuoB, C, D, E, F, and G constitute the peripheral sector of the complex.

Its subcellular location is the cell inner membrane. The catalysed reaction is a quinone + NADH + 5 H(+)(in) = a quinol + NAD(+) + 4 H(+)(out). In terms of biological role, NDH-1 shuttles electrons from NADH, via FMN and iron-sulfur (Fe-S) centers, to quinones in the respiratory chain. The immediate electron acceptor for the enzyme in this species is believed to be ubiquinone. Couples the redox reaction to proton translocation (for every two electrons transferred, four hydrogen ions are translocated across the cytoplasmic membrane), and thus conserves the redox energy in a proton gradient. The sequence is that of NADH-quinone oxidoreductase subunit D from Sphingopyxis alaskensis (strain DSM 13593 / LMG 18877 / RB2256) (Sphingomonas alaskensis).